Here is a 485-residue protein sequence, read N- to C-terminus: Threonine synthase-like 2 (485 aa).

N6-(pyridoxal phosphate)lysine is present on K113.

This sequence belongs to the threonine synthase family. Pyridoxal 5'-phosphate serves as cofactor.

In terms of biological role, acts as a catabolic phospho-lyase on both gamma- and beta-phosphorylated substrates. Degrades O-phospho-threonine (PThr) to alpha-ketobutyrate, ammonia and phosphate. The protein is Threonine synthase-like 2 (Thnsl2) of Rattus norvegicus (Rat).